A 307-amino-acid chain; its full sequence is MESEDNPLRIQTGSLCSFQRPTPLVLIHDSSGTTFSYFRLGSLNRDVWAIHDPHFDKSTPWKGGFGEIAEHYIKLIETAGIRGSILLGGWSLGGYLALTIAHKLTAITNPTFSVTGILLVDSPYHTPMSKLPPHAPDPNFQHLPELVRKSFENYDVLLDRWELPPWTAPALEGKTIRCSAGGKTFTVANGRILYKPLGKGWEDVKMQSFEHGTSTLERYIELPPAALIRCAQAIPTDTDSKMPCFVDRFRHETLLGWDSNFPSFIKAAVDTNTHHFNIFESQNLKRLTIQLNECLEVLDSCCPMGYC.

This sequence belongs to the AMT4 thioesterase family.

Its pathway is secondary metabolite biosynthesis. Probable thioesterase; part of the gene cluster that mediates the biosynthesis of KK-1, a novel cyclic depsipeptide with 10 residues which is a promising active compound with high activity against many plant pathogens, especially Botrytis cinerea. Within the pathway, kk1J is not essential for the biosynthesis of KK-1, but plays a role for efficient production via correction of peptide chain synthesis by kk1B. The nonribosomal peptide synthetase (NRPS) kk1B catalyzes the elongation and cyclization of the decapeptide chain composed of 1 D-lactic acid residue (D-Lac), 1 pipecolic acid residue (Pip), 1 aspartic acid residue (Asp), 1 isoleucine residue (Ile), 1 glycine residue (Gly), 1 tyrosine residue (Tyr) and 4 valine residues (Val). The Asp, Ile and 3 Val residues are N-methylated by the 5 methyltransferase domains from the NRPS (found in modules 3, 5, 6, 7 and 9), whereas the Tyr residue is O-methylated by the cluster encoded O-methyltransferase kk1A. The thioesterase kk1J is likely to be involved in the corrective mechanism of peptide chain synthesis. The D-lactate dehydrogenase kk1H is involved in the synthesis of D-lactic acid from pyruvic acid, which is recognized by the A domain of the first kk1B module. The pyrroline-5-carboxylate reductase kk1I is involved in the synthesis of the L-pipecolic acid residue of KK-1 from delta-1-pyrroline-5-carboxylate (P5C), a metabolic intermediate of lysine. It still is unclear how kk1C and kk1D are involved in the production of KK-1. This is Probable thioesterase KK1J from Curvularia clavata.